We begin with the raw amino-acid sequence, 288 residues long: Pantothenate synthetase (288 aa).

30–37 provides a ligand contact to ATP; it reads MGFLHEGH. Catalysis depends on His37, which acts as the Proton donor. A (R)-pantoate-binding site is contributed by Gln61. A beta-alanine-binding site is contributed by Gln61. Residue 147–150 coordinates ATP; that stretch reads GLKD. Gln153 contributes to the (R)-pantoate binding site. ATP-binding positions include Val176 and 184 to 187; that span reads KSSR.

The protein belongs to the pantothenate synthetase family. As to quaternary structure, homodimer.

The protein localises to the cytoplasm. It catalyses the reaction (R)-pantoate + beta-alanine + ATP = (R)-pantothenate + AMP + diphosphate + H(+). It participates in cofactor biosynthesis; (R)-pantothenate biosynthesis; (R)-pantothenate from (R)-pantoate and beta-alanine: step 1/1. In terms of biological role, catalyzes the condensation of pantoate with beta-alanine in an ATP-dependent reaction via a pantoyl-adenylate intermediate. This Bacillus pumilus (strain SAFR-032) protein is Pantothenate synthetase.